Consider the following 618-residue polypeptide: DNA ligase 2 (618 aa).

Residues 197-208 show a composition bias toward basic and acidic residues; sequence DKKTLESREDAK. A disordered region spans residues 197 to 250; it reads DKKTLESREDAKSVPPASQPEITNKISGDTSPNTSESVQTKKSDPDTSSNVDPS. Polar residues predominate over residues 216–234; it reads PEITNKISGDTSPNTSESV. ATP is bound at residue Glu312. The active-site N6-AMP-lysine intermediate is Lys314. 6 residues coordinate ATP: Arg319, Arg334, Glu363, Phe403, Arg476, and Lys482. The interval 459-480 is disordered; that stretch reads HEGVMLKDPDSTYNPGSRGQHW.

Belongs to the ATP-dependent DNA ligase family. It depends on Mg(2+) as a cofactor.

The catalysed reaction is ATP + (deoxyribonucleotide)n-3'-hydroxyl + 5'-phospho-(deoxyribonucleotide)m = (deoxyribonucleotide)n+m + AMP + diphosphate.. In terms of biological role, DNA ligase that seals nicks in double-stranded DNA during DNA replication, DNA recombination and DNA repair. The sequence is that of DNA ligase 2 from Haloquadratum walsbyi (strain DSM 16790 / HBSQ001).